Reading from the N-terminus, the 239-residue chain is Purine nucleoside phosphorylase DeoD-type (239 aa).

Position 5 (His5) interacts with a purine D-ribonucleoside. Residues Gly21, Arg25, Arg44, and 88 to 91 (RIGS) contribute to the phosphate site. Residues 180 to 182 (EME) and 204 to 205 (TD) each bind a purine D-ribonucleoside. Asp205 functions as the Proton donor in the catalytic mechanism.

This sequence belongs to the PNP/UDP phosphorylase family. Homohexamer; trimer of homodimers.

The enzyme catalyses a purine D-ribonucleoside + phosphate = a purine nucleobase + alpha-D-ribose 1-phosphate. It catalyses the reaction a purine 2'-deoxy-D-ribonucleoside + phosphate = a purine nucleobase + 2-deoxy-alpha-D-ribose 1-phosphate. Catalyzes the reversible phosphorolytic breakdown of the N-glycosidic bond in the beta-(deoxy)ribonucleoside molecules, with the formation of the corresponding free purine bases and pentose-1-phosphate. The protein is Purine nucleoside phosphorylase DeoD-type of Aliivibrio fischeri (strain ATCC 700601 / ES114) (Vibrio fischeri).